Reading from the N-terminus, the 637-residue chain is DNA gyrase subunit B (637 aa).

Positions 421 to 535 (SEIYIVEGDS…HGYVYIAQPP (115 aa)) constitute a Toprim domain. 3 residues coordinate Mg(2+): E427, D500, and D502.

Belongs to the type II topoisomerase GyrB family. As to quaternary structure, heterotetramer, composed of two GyrA and two GyrB chains. In the heterotetramer, GyrA contains the active site tyrosine that forms a transient covalent intermediate with DNA, while GyrB binds cofactors and catalyzes ATP hydrolysis. It depends on Mg(2+) as a cofactor. Mn(2+) serves as cofactor. Requires Ca(2+) as cofactor.

It is found in the cytoplasm. It catalyses the reaction ATP-dependent breakage, passage and rejoining of double-stranded DNA.. Functionally, a type II topoisomerase that negatively supercoils closed circular double-stranded (ds) DNA in an ATP-dependent manner to modulate DNA topology and maintain chromosomes in an underwound state. Negative supercoiling favors strand separation, and DNA replication, transcription, recombination and repair, all of which involve strand separation. Also able to catalyze the interconversion of other topological isomers of dsDNA rings, including catenanes and knotted rings. Type II topoisomerases break and join 2 DNA strands simultaneously in an ATP-dependent manner. This Halalkalibacterium halodurans (strain ATCC BAA-125 / DSM 18197 / FERM 7344 / JCM 9153 / C-125) (Bacillus halodurans) protein is DNA gyrase subunit B.